Here is a 188-residue protein sequence, read N- to C-terminus: Elongation factor P (188 aa).

Position 34 is an N6-(3,6-diaminohexanoyl)-5-hydroxylysine (lysine 34).

Belongs to the elongation factor P family. May be beta-lysylated on the epsilon-amino group of Lys-34 by the combined action of EpmA and EpmB, and then hydroxylated on the C5 position of the same residue by EpmC (if this protein is present). Lysylation is critical for the stimulatory effect of EF-P on peptide-bond formation. The lysylation moiety may extend toward the peptidyltransferase center and stabilize the terminal 3-CCA end of the tRNA. Hydroxylation of the C5 position on Lys-34 may allow additional potential stabilizing hydrogen-bond interactions with the P-tRNA.

The protein localises to the cytoplasm. It participates in protein biosynthesis; polypeptide chain elongation. Involved in peptide bond synthesis. Alleviates ribosome stalling that occurs when 3 or more consecutive Pro residues or the sequence PPG is present in a protein, possibly by augmenting the peptidyl transferase activity of the ribosome. Modification of Lys-34 is required for alleviation. In Vibrio vulnificus (strain CMCP6), this protein is Elongation factor P.